The following is a 530-amino-acid chain: GH3 domain-containing protein (530 aa).

Residues 1 to 17 (MLLWPLLLLLLLLPTLA) form the signal peptide. Positions 99–122 (LTKASQTQQEDSGEQPLPPTSNQD) are disordered. A glycan (N-linked (GlcNAc...) asparagine) is linked at asparagine 450. N5-methylglutamine is present on glutamine 489.

The protein belongs to the GH3 family. Post-translationally, methylated at Gln-489 by N6AMT1.

The protein localises to the endoplasmic reticulum. The protein resides in the nucleus envelope. The chain is GH3 domain-containing protein (GHDC) from Homo sapiens (Human).